A 481-amino-acid polypeptide reads, in one-letter code: Glutamyl-tRNA(Gln) amidotransferase subunit A (481 aa).

Active-site charge relay system residues include Lys76 and Ser151. Ser175 functions as the Acyl-ester intermediate in the catalytic mechanism.

The protein belongs to the amidase family. GatA subfamily. Heterotrimer of A, B and C subunits.

The catalysed reaction is L-glutamyl-tRNA(Gln) + L-glutamine + ATP + H2O = L-glutaminyl-tRNA(Gln) + L-glutamate + ADP + phosphate + H(+). Its function is as follows. Allows the formation of correctly charged Gln-tRNA(Gln) through the transamidation of misacylated Glu-tRNA(Gln) in organisms which lack glutaminyl-tRNA synthetase. The reaction takes place in the presence of glutamine and ATP through an activated gamma-phospho-Glu-tRNA(Gln). This is Glutamyl-tRNA(Gln) amidotransferase subunit A from Neisseria meningitidis serogroup C (strain 053442).